The primary structure comprises 1115 residues: Carbamoyl phosphate synthase large chain (1115 aa).

The interval 1–407 (MPRRTDLHHV…ALGKVMRSLE (407 aa)) is carboxyphosphate synthetic domain. Positions 134, 174, 180, 181, 213, 215, 220, 246, 247, 248, 290, and 304 each coordinate ATP. Residues 138–333 (KDIVAKAGGE…IAKIAAKLAI (196 aa)) enclose the ATP-grasp 1 domain. Mg(2+) contacts are provided by glutamine 290, glutamate 304, and asparagine 306. Positions 290, 304, and 306 each coordinate Mn(2+). Positions 408–559 (TTRAGFWTAP…ELDPAAETEV (152 aa)) are oligomerization domain. The segment at 560-965 (APQTERPKVL…AFAKSQTAAY (406 aa)) is carbamoyl phosphate synthetic domain. The region spanning 693-884 (GDLLSAAGLP…LAKACARIML (192 aa)) is the ATP-grasp 2 domain. ATP contacts are provided by arginine 729, arginine 768, leucine 770, glutamate 775, glycine 800, isoleucine 801, histidine 802, serine 803, glutamine 843, and glutamate 855. Mg(2+)-binding residues include glutamine 843, glutamate 855, and asparagine 857. Residues glutamine 843, glutamate 855, and asparagine 857 each coordinate Mn(2+). One can recognise an MGS-like domain in the interval 966–1113 (GSLPAQGTVF…QELHRVIGGV (148 aa)). The allosteric domain stretch occupies residues 966–1115 (GSLPAQGTVF…LHRVIGGVER (150 aa)).

This sequence belongs to the CarB family. Composed of two chains; the small (or glutamine) chain promotes the hydrolysis of glutamine to ammonia, which is used by the large (or ammonia) chain to synthesize carbamoyl phosphate. Tetramer of heterodimers (alpha,beta)4. It depends on Mg(2+) as a cofactor. Requires Mn(2+) as cofactor.

It catalyses the reaction hydrogencarbonate + L-glutamine + 2 ATP + H2O = carbamoyl phosphate + L-glutamate + 2 ADP + phosphate + 2 H(+). The catalysed reaction is hydrogencarbonate + NH4(+) + 2 ATP = carbamoyl phosphate + 2 ADP + phosphate + 2 H(+). Its pathway is amino-acid biosynthesis; L-arginine biosynthesis; carbamoyl phosphate from bicarbonate: step 1/1. It participates in pyrimidine metabolism; UMP biosynthesis via de novo pathway; (S)-dihydroorotate from bicarbonate: step 1/3. Large subunit of the glutamine-dependent carbamoyl phosphate synthetase (CPSase). CPSase catalyzes the formation of carbamoyl phosphate from the ammonia moiety of glutamine, carbonate, and phosphate donated by ATP, constituting the first step of 2 biosynthetic pathways, one leading to arginine and/or urea and the other to pyrimidine nucleotides. The large subunit (synthetase) binds the substrates ammonia (free or transferred from glutamine from the small subunit), hydrogencarbonate and ATP and carries out an ATP-coupled ligase reaction, activating hydrogencarbonate by forming carboxy phosphate which reacts with ammonia to form carbamoyl phosphate. This is Carbamoyl phosphate synthase large chain from Mycobacterium bovis (strain ATCC BAA-935 / AF2122/97).